Reading from the N-terminus, the 282-residue chain is UDP-3-O-acyl-N-acetylglucosamine deacetylase (282 aa).

His74, His226, and Asp230 together coordinate Zn(2+). His253 serves as the catalytic Proton donor.

It belongs to the LpxC family. It depends on Zn(2+) as a cofactor.

The enzyme catalyses a UDP-3-O-[(3R)-3-hydroxyacyl]-N-acetyl-alpha-D-glucosamine + H2O = a UDP-3-O-[(3R)-3-hydroxyacyl]-alpha-D-glucosamine + acetate. Its pathway is glycolipid biosynthesis; lipid IV(A) biosynthesis; lipid IV(A) from (3R)-3-hydroxytetradecanoyl-[acyl-carrier-protein] and UDP-N-acetyl-alpha-D-glucosamine: step 2/6. Catalyzes the hydrolysis of UDP-3-O-myristoyl-N-acetylglucosamine to form UDP-3-O-myristoylglucosamine and acetate, the committed step in lipid A biosynthesis. This chain is UDP-3-O-acyl-N-acetylglucosamine deacetylase, found in Aquifex aeolicus (strain VF5).